We begin with the raw amino-acid sequence, 377 residues long: Metallo-hydrolase mfmC (377 aa).

Residues His-126, His-128, Asp-130, His-131, His-209, and Asp-233 each coordinate Zn(2+).

This sequence belongs to the metallo-beta-lactamase superfamily.

It functions in the pathway secondary metabolite biosynthesis; terpenoid biosynthesis. Its function is as follows. Metallo-hydrolase; part of the gene cluster that mediates the biosynthesis of the phthalide-terpenoid hybrid 11'-O-desmethylfendlerol. Within the pathway, mfma and mfmC act together to convert 3,5-dimethylorsellinic acid (DMOA) into the phthalide 5,7-dihydroxy-4-(hydroxymethyl)-6-methylphthalide. The biosynthesis of 11'-O-desmethylfendlerol begins with the NR-PKS mfmB that forms 3,5-dimethylorsellinic acid (DMOA), which is then transformed into the phthalide 5,7-dihydroxy-4-(hydroxymethyl)-6-methylphthalide by the cytochrome P450 monooxygenase mfmA and the hydrolase mfmC. Subsequently, the methyltransferase mfmE catalyzes 7-O-methylation to yield 5-hydroxy-4-(hydroxymethyl)-7-methoxy-6-methylphthalide, which undergoes C-3 hydroxylation by the cytochrome P450 monooxygenase mfmF. The resultant cyclopolic acid (2,5-dihydroxy-4-(hydroxymethyl)-7-methoxy-6-methylphthalide) is then farnesylated by the DMATS-type prenyltransferase mfmD to afford 5-O-farnesylcyclopolic acid. Finally, the Pyr4-family terpene cyclase mfmH cyclizes the farnesyl moiety of 5-O-farnesylcyclopolic acid into a drimane-like structure, thus completing the biosynthesis of 11'-O-desmethylfendlerol. This is Metallo-hydrolase mfmC from Annulohypoxylon moriforme (Filamentous fungus).